The primary structure comprises 308 residues: UDP-N-acetylenolpyruvoylglucosamine reductase (308 aa).

The 166-residue stretch at 35–200 folds into the FAD-binding PCMH-type domain; that stretch reads RVGGPAQVLF…TSARFRGEPM (166 aa). Residue Arg180 is part of the active site. Residues 211-226 are compositionally biased toward basic and acidic residues; the sequence is EVQRHRETAQPVREKT. A disordered region spans residues 211–236; that stretch reads EVQRHRETAQPVREKTGGSTFKNPPG. The active-site Proton donor is Ser229. Glu299 is an active-site residue.

The protein belongs to the MurB family. The cofactor is FAD.

Its subcellular location is the cytoplasm. The catalysed reaction is UDP-N-acetyl-alpha-D-muramate + NADP(+) = UDP-N-acetyl-3-O-(1-carboxyvinyl)-alpha-D-glucosamine + NADPH + H(+). It participates in cell wall biogenesis; peptidoglycan biosynthesis. Its function is as follows. Cell wall formation. The protein is UDP-N-acetylenolpyruvoylglucosamine reductase of Rhodopseudomonas palustris (strain BisB18).